The chain runs to 124 residues: Snake venom vascular endothelial growth factor toxin apiscin (124 aa).

Positions 1-24 (MAAYLLAVAILFCIQGWPSGTVQG) are cleaved as a signal peptide. Q25 is modified (pyrrolidone carboxylic acid). Cystine bridges form between C38/C80, C69/C115, and C73/C117.

This sequence belongs to the PDGF/VEGF growth factor family. Snake venom VEGF subfamily. Homodimer; disulfide-linked. Interacts with VEGF receptor-1 (FLT1) with a high affinity, whereas it binds to VEGF receptor-2 (KDR) with a low affinity. Does not bind VEGF receptor-3 (FLT4). Expressed by the venom gland.

It is found in the secreted. In terms of biological role, snake venom VEGFs that may contribute to venom dispersion and prey subjugation by inducing vascular permeability and hypotension. This protein induces an increase in capillary permeability after intradermal injection, as well as a drastic hypotensive effect after intravenous injection. The hypotension is mediated by nitric oxide (NO), which is produced by VEGF-activated endothelium NO synthase. Also induces angiogenesis in vitro. Like other crotalid VEGFs, this protein interacts with VEGF receptor-1 (FLT1) with a high affinity, whereas it binds to VEGF receptor-2 (KDR) with a low affinity. In Agkistrodon piscivorus piscivorus (Eastern cottonmouth), this protein is Snake venom vascular endothelial growth factor toxin apiscin.